The chain runs to 894 residues: Transcriptional activator/repressor GIS1 (894 aa).

In terms of domain architecture, JmjN spans 12–53 (VPVFKPSMMEFANFQYFIDEITKFGIENGIVKVIPPKEWLEL). Ser70 is modified (phosphoserine). A coiled-coil region spans residues 90–110 (ENEYDNKSYNLTQWKNLAESL). The JmjC domain occupies 170–324 (PYDLTLWNLN…VRKQPLKCGC (155 aa)). Positions 316–332 (RKQPLKCGCGNKKEERK) match the Bipartite nuclear localization signal motif. Positions 324–355 (CGNKKEERKSGPFSNLSYDSNESEQRGSITDN) are disordered. A compositionally biased stretch (polar residues) spans 335-354 (PFSNLSYDSNESEQRGSITD). Ser343 is modified (phosphoserine). A coiled-coil region spans residues 361 to 385 (QKVRSFDELLNHSSQELQNLEDNKN). The segment covering 521–554 (NISSTNNSANNSSSNNNVSTVPSSMMHSSTLNGT) has biased composition (low complexity). Positions 521 to 558 (NISSTNNSANNSSSNNNVSTVPSSMMHSSTLNGTSGLG) are disordered. A phosphoserine mark is found at Ser690, Ser694, Ser696, Ser734, and Ser747. A compositionally biased stretch (low complexity) spans 756–768 (LNGNDNSNLDSNN). The disordered stretch occupies residues 756-810 (LNGNDNSNLDSNNFDYSFTGNKQESNPSILNNNTNNNDNYRTSSMNNNGNNYQAH). 2 stretches are compositionally biased toward polar residues: residues 769–785 (FDYS…PSIL) and 795–810 (YRTS…YQAH). Residues 828 to 851 (YICRECNRQFSSGHHLTRHKKSVH) form a C2H2-type 1 zinc finger. Residues 857 to 882 (HSCPRCGKRFKRRDHVLQHLNKKIPC) form a C2H2-type 2; atypical zinc finger.

It is found in the nucleus. Its function is as follows. Transcription factor involved in the regulation of gene expression upon nutrient starvation. Recognizes and binds to the post-diauxic-shift element 5'-T[AT]AGGGAT-3' in the promoter region. Can act as a transcriptional activator (e.g. of stress genes like SSA3, HSP12 and HSP26) as well as a repressor (e.g. of pyrophosphate phosphatase DPP1). GIS1 also acts as a DNA damage-responsive transcriptional repressor of photolyase PHR1. This is Transcriptional activator/repressor GIS1 (GIS1) from Saccharomyces cerevisiae (strain ATCC 204508 / S288c) (Baker's yeast).